A 315-amino-acid polypeptide reads, in one-letter code: L-lactate dehydrogenase (315 aa).

NAD(+) is bound by residues Val16, Asp37, and 81–82 (GA). Substrate-binding positions include Gln84, Arg90, and 122 to 125 (NPVD). Residues 120-122 (VSN) and Ser145 each bind NAD(+). 150–153 (DTAR) lines the substrate pocket. Residues Arg155 and His170 each coordinate beta-D-fructose 1,6-bisphosphate. His177 (proton acceptor) is an active-site residue. A Phosphotyrosine modification is found at Tyr224. Thr233 lines the substrate pocket.

The protein belongs to the LDH/MDH superfamily. LDH family. As to quaternary structure, homotetramer.

The protein resides in the cytoplasm. It catalyses the reaction (S)-lactate + NAD(+) = pyruvate + NADH + H(+). The protein operates within fermentation; pyruvate fermentation to lactate; (S)-lactate from pyruvate: step 1/1. Its activity is regulated as follows. Allosterically activated by fructose 1,6-bisphosphate (FBP). Functionally, catalyzes the conversion of lactate to pyruvate. The sequence is that of L-lactate dehydrogenase from Treponema denticola (strain ATCC 35405 / DSM 14222 / CIP 103919 / JCM 8153 / KCTC 15104).